We begin with the raw amino-acid sequence, 497 residues long: Cysteine-rich secretory protein LCCL domain-containing 2 (497 aa).

The first 22 residues, 1–22 (MSCVLGGVIPLGLLFLVCGSQG), serve as a signal peptide directing secretion. Residue Asn27 is glycosylated (N-linked (GlcNAc...) asparagine). The region spanning 62–200 (LHNKLRGQVQ…ENAVYFVCNY (139 aa)) is the SCP domain. LCCL domains follow at residues 284-379 (MTQV…SSSF) and 385-488 (KVQD…RDGK). Intrachain disulfides connect Cys290–Cys308, Cys312–Cys332, Cys391–Cys413, and Cys417–Cys440.

Belongs to the CRISP family. As to quaternary structure, binds to heparin, dermatan sulfate and chondroitin sulfate.

Its subcellular location is the secreted. Promotes matrix assembly. The chain is Cysteine-rich secretory protein LCCL domain-containing 2 (CRISPLD2) from Homo sapiens (Human).